The sequence spans 287 residues: 4-diphosphocytidyl-2-C-methyl-D-erythritol kinase (287 aa).

Residue lysine 11 is part of the active site. ATP is bound at residue 93 to 103; it reads PFGAGLGGGSS. Aspartate 135 is a catalytic residue.

Belongs to the GHMP kinase family. IspE subfamily.

The enzyme catalyses 4-CDP-2-C-methyl-D-erythritol + ATP = 4-CDP-2-C-methyl-D-erythritol 2-phosphate + ADP + H(+). The protein operates within isoprenoid biosynthesis; isopentenyl diphosphate biosynthesis via DXP pathway; isopentenyl diphosphate from 1-deoxy-D-xylulose 5-phosphate: step 3/6. Functionally, catalyzes the phosphorylation of the position 2 hydroxy group of 4-diphosphocytidyl-2C-methyl-D-erythritol. The chain is 4-diphosphocytidyl-2-C-methyl-D-erythritol kinase from Pelodictyon phaeoclathratiforme (strain DSM 5477 / BU-1).